The chain runs to 662 residues: Zinc finger protein 800 (662 aa).

The C2H2-type 1; degenerate zinc finger occupies 69 to 91 (FECKLCRSLFRGLPNLITHKKFY). Residue Lys132 forms a Glycyl lysine isopeptide (Lys-Gly) (interchain with G-Cter in SUMO2) linkage. 2 disordered regions span residues 172 to 197 (ETSS…PPSI) and 205 to 224 (AAPT…TSDS). Positions 205–216 (AAPTEEQPQESQ) are enriched in low complexity. The segment at 231–254 (LICCLCRKEFNSRRGVRRHIRKVH) adopts a C2H2-type 2 zinc-finger fold. Lys280 is covalently cross-linked (Glycyl lysine isopeptide (Lys-Gly) (interchain with G-Cter in SUMO2)). A C2H2-type 3 zinc finger spans residues 288-311 (RSCPVCCKSFATKANVRRHFDEVH). Ser318 bears the Phosphoserine mark. Residues 319 to 349 (ITPDIATKPGQPLFLDSASPKKSFKTRKQKS) are disordered. The residue at position 320 (Thr320) is a Phosphothreonine. The residue at position 337 (Ser337) is a Phosphoserine. A compositionally biased stretch (basic residues) spans 340–349 (KSFKTRKQKS). The C2H2-type 4 zinc finger occupies 357–382 (TACKCLLCKRKYSSQIMLKRHMQIVH). A disordered region spans residues 389-473 (ANSKREKGPN…AGGQQKTRKP (85 aa)). Residue Lys392 forms a Glycyl lysine isopeptide (Lys-Gly) (interchain with G-Cter in SUMO2) linkage. Residues 414-434 (VESSPPSITHSPQNELKGTNH) are compositionally biased toward polar residues. Ser420, Ser424, Ser453, Ser455, Ser458, and Ser460 each carry phosphoserine. A compositionally biased stretch (low complexity) spans 456 to 468 (PKSASPSAAGGQQ). Lys474 is covalently cross-linked (Glycyl lysine isopeptide (Lys-Gly) (interchain with G-Cter in SUMO2)). 2 C2H2-type zinc fingers span residues 484–506 (LYCK…IELH) and 517–540 (YKCP…TVVH). Disordered regions lie at residues 573 to 597 (RGPS…PSKK) and 633 to 662 (HHKK…KALV). The segment covering 575-587 (PSREEAKHNDSKQ) has biased composition (basic and acidic residues). A Glycyl lysine isopeptide (Lys-Gly) (interchain with G-Cter in SUMO2) cross-link involves residue Lys597. Residues 616-638 (HRCNKCGKAFAKKTYLEHHKKTH) form a C2H2-type 7 zinc finger. Residues 651–662 (TKGRSTRSKALV) are compositionally biased toward basic residues.

The protein belongs to the krueppel C2H2-type zinc-finger protein family.

The protein resides in the nucleus. In terms of biological role, may be involved in transcriptional regulation. This is Zinc finger protein 800 (Znf800) from Mus musculus (Mouse).